A 1114-amino-acid polypeptide reads, in one-letter code: Putative surface protein SAV2496/SAV2497 (1114 aa).

The first 50 residues, 1–50 (MRDKKGPVNKRVDFLSNKLNKYSIRKFTVGTASILIGSLMYLGTQQEAEA), serve as a signal peptide directing secretion. 3 disordered regions span residues 76–116 (TNKD…EDTP), 440–473 (KFNPDLAPGTEKVTREGQKGEKTITTPTLKNPLT), and 496–1088 (EYGP…TGLE). Basic and acidic residues-rich tracts occupy residues 96–116 (DTIEHEASVKAEDISKKEDTP), 451–461 (KVTREGQKGEK), 505–523 (GHRDEFDPKLPTGEKEEVP), 554–570 (SIVEKEEIPFEKERKFN), and 579–589 (KVTREGQKGEK). Residues 419–501 (SAKNNNRIRK…NELTEYGPET (83 aa)) enclose the G5 1 domain. Residues 547–628 (YGPVKGDSIV…NELTEYGPET (82 aa)) enclose the G5 2 domain. A compositionally biased stretch (low complexity) spans 590 to 604 (TTTPTLKNPLTGEII). 11 stretches are compositionally biased toward basic and acidic residues: residues 605-618 (SKGESKEEITKDPI), 632-650 (GHRDEFDPKLPTGEKEEVP), 681-697 (SIVEKEEIPFKKERKFN), 706-716 (KVTREGQKGEK), 733-746 (SKGESKEEITKDPI), 760-778 (GHRDEFDPKLPTGEKEEVP), 809-825 (SIVEKEEIPFEKERKFN), 834-844 (KVTREGQKGEK), 861-874 (SKGESKEEITKDPV), 918-929 (KVIEEPVDDVIK), and 946-965 (FETKREFNPKLQPGEERVKQ). The G5 3 domain maps to 674–756 (YGPVKGDSIV…NELTEYGPET (83 aa)). Residues 802–884 (YGPVKGDSIV…NELTEFGGEK (83 aa)) enclose the G5 4 domain. Positions 930-1012 (HGPKTGTPET…DKIVEFGGEK (83 aa)) constitute a G5 5 domain. The span at 968–982 (QPGSKTITTPITVNP) shows a compositional bias: polar residues. Basic and acidic residues predominate over residues 996–1026 (EITKQPVDKIVEFGGEKPKDPKGPENPEKPS). Residues 1082–1086 (LPKTG) carry the LPXTG sorting signal motif. A Pentaglycyl murein peptidoglycan amidated threonine modification is found at Thr1085. A propeptide spans 1086 to 1114 (GLESTQKGLIFSSIIGIAGLMLLARRRKN) (removed by sortase).

The protein resides in the secreted. The protein localises to the cell wall. The chain is Putative surface protein SAV2496/SAV2497 from Staphylococcus aureus (strain Mu50 / ATCC 700699).